The sequence spans 221 residues: MSQIDIYNIQNEKVGTLDIKDEIFNIDPNMDVLYRYVDMQLTNKRAGTASTKTRSEVSGGGRKPWPQKHTGRARAGSIRSPLFRHGGVTFGPKPREFHKDLNKKMKRLALKSALSVRYRENNLIVLDEVKFEKPRTKDVKNILSKFGMEDTKVLFLFPYHQEQYENFKLSARNLPKVKVIIADNPGQNKKNVDGLNVFDLINSEKIVLTKEMVNKIEEVIG.

A disordered region spans residues 46 to 74 (AGTASTKTRSEVSGGGRKPWPQKHTGRAR).

Belongs to the universal ribosomal protein uL4 family. As to quaternary structure, part of the 50S ribosomal subunit.

Functionally, one of the primary rRNA binding proteins, this protein initially binds near the 5'-end of the 23S rRNA. It is important during the early stages of 50S assembly. It makes multiple contacts with different domains of the 23S rRNA in the assembled 50S subunit and ribosome. Forms part of the polypeptide exit tunnel. This is Large ribosomal subunit protein uL4 from Petrotoga mobilis (strain DSM 10674 / SJ95).